A 130-amino-acid chain; its full sequence is Small ribosomal subunit protein uS8 (130 aa).

It belongs to the universal ribosomal protein uS8 family. Part of the 30S ribosomal subunit. Contacts proteins S5 and S12.

Functionally, one of the primary rRNA binding proteins, it binds directly to 16S rRNA central domain where it helps coordinate assembly of the platform of the 30S subunit. The polypeptide is Small ribosomal subunit protein uS8 (Saccharophagus degradans (strain 2-40 / ATCC 43961 / DSM 17024)).